Reading from the N-terminus, the 153-residue chain is uncharacterized protein (153 aa).

Residues 1 to 19 (MKACLLLFFYFSFICQLHG) form the signal peptide.

This is an uncharacterized protein from Escherichia coli (strain K12).